A 239-amino-acid chain; its full sequence is DNA repair protein RecO (239 aa).

Belongs to the RecO family.

Its function is as follows. Involved in DNA repair and RecF pathway recombination. The polypeptide is DNA repair protein RecO (Bifidobacterium longum (strain DJO10A)).